Here is an 84-residue protein sequence, read N- to C-terminus: Sulfur carrier protein TusA (84 aa).

Catalysis depends on Cys-19, which acts as the Cysteine persulfide intermediate.

It belongs to the sulfur carrier protein TusA family. In terms of assembly, interacts with IscS.

It is found in the cytoplasm. The protein operates within tRNA modification. Functionally, sulfur carrier protein involved in sulfur trafficking in the cell. Part of a sulfur-relay system required for 2-thiolation during synthesis of 2-thiouridine of the modified wobble base 5-methylaminomethyl-2-thiouridine (mnm(5)s(2)U) in tRNA. Interacts with IscS and stimulates its cysteine desulfurase activity. Accepts an activated sulfur from IscS, which is then transferred to TusD, and thus determines the direction of sulfur flow from IscS to 2-thiouridine formation. Also appears to be involved in sulfur transfer for the biosynthesis of molybdopterin. This is Sulfur carrier protein TusA from Yersinia enterocolitica serotype O:8 / biotype 1B (strain NCTC 13174 / 8081).